The sequence spans 99 residues: DNA-binding protein HmvA (99 aa).

Positions 52 to 55 (KTIK) are interaction with DNA.

Belongs to the archaeal histone HMF family. In terms of assembly, homodimer or heterodimer with another histone. Dimers then assemble into higher oligomers, with the DNA wrapped around the protein core.

The protein resides in the cytoplasm. Its subcellular location is the chromosome. Its function is as follows. Binds and compact DNA (95 to 150 base pairs) to form nucleosome-like structures that contain positive DNA supercoils. Increases the resistance of DNA to thermal denaturation (in vitro). This chain is DNA-binding protein HmvA (hmvA), found in Methanococcus voltae.